Here is a 395-residue protein sequence, read N- to C-terminus: Putative gustatory receptor 58a (395 aa).

The Cytoplasmic segment spans residues 1–32; the sequence is MLLKFMYIYGIGCGLMPAPLKKGQFLLGYKQR. The chain crosses the membrane as a helical span at residues 33–53; that stretch reads WYLIYTACLHGGLLTVLPFTF. At 54-72 the chain is on the extracellular side; that stretch reads PHYMYDDSYMSSNPVLKWT. The helical transmembrane segment at 73 to 93 threads the bilayer; it reads FNLTNITRIMAMFSGVLLMWF. Topologically, residues 94–131 are cytoplasmic; it reads RRKRILNLGENLILHCLKCKTLDNRSKKYSKLRKRVRN. The chain crosses the membrane as a helical span at residues 132 to 152; it reads VLFQMLLVANLSILLGALILF. Residues 153 to 169 lie on the Extracellular side of the membrane; that stretch reads RIHSVQRISKTAMIVAH. The chain crosses the membrane as a helical span at residues 170–190; sequence ITQFIYVVFMMTGICVILLVL. Topologically, residues 191–250 are cytoplasmic; sequence HWQSERLQIALKDLCSFLNHEERNSLTLSENKANRSLGKLAKLFKLFAENQRLVREVFRT. A helical transmembrane segment spans residues 251 to 271; it reads FDLPIALLLLKMFVTNVNLVY. Over 272–288 the chain is Extracellular; it reads HGVQFGNDTIETSSYTR. N278 is a glycosylation site (N-linked (GlcNAc...) asparagine). A helical transmembrane segment spans residues 289–309; the sequence is IVGQWVVISHYWSAVLLMNVV. Residues 310-366 are Cytoplasmic-facing; that stretch reads DDVTRRSDLKMGDLLREFSHLELVKRDFHLQLELFSDHLRCHPSTYKVCGLFIFNKQ. The helical transmembrane segment at 367-387 threads the bilayer; that stretch reads TSLAYFFYVLVQVLVLVQFDL. The Extracellular portion of the chain corresponds to 388–395; that stretch reads KNKVEKRN.

It belongs to the insect chemoreceptor superfamily. Gustatory receptor (GR) family. Gr22e subfamily. As to expression, expressed in the adult labellar chemosensory neurons.

It localises to the cell membrane. Probable gustatory receptor which mediates acceptance or avoidance behavior, depending on its substrates. The chain is Putative gustatory receptor 58a (Gr58a) from Drosophila melanogaster (Fruit fly).